Here is a 227-residue protein sequence, read N- to C-terminus: LexA repressor (227 aa).

Residues 26-46 constitute a DNA-binding region (H-T-H motif); sequence FDEMKEALDLASKSGIHRLIT. Catalysis depends on for autocatalytic cleavage activity residues serine 147 and lysine 185.

This sequence belongs to the peptidase S24 family. As to quaternary structure, homodimer.

The enzyme catalyses Hydrolysis of Ala-|-Gly bond in repressor LexA.. In terms of biological role, represses a number of genes involved in the response to DNA damage (SOS response), including recA and lexA. In the presence of single-stranded DNA, RecA interacts with LexA causing an autocatalytic cleavage which disrupts the DNA-binding part of LexA, leading to derepression of the SOS regulon and eventually DNA repair. The polypeptide is LexA repressor (Hyphomonas neptunium (strain ATCC 15444)).